A 451-amino-acid chain; its full sequence is D-inositol 3-phosphate glycosyltransferase (451 aa).

Residue H37 coordinates 1D-myo-inositol 3-phosphate. Residues 43 to 44 (QP) and G51 each bind UDP-N-acetyl-alpha-D-glucosamine. Residues 48 to 53 (DAGGMN), K106, Y138, T162, and R182 contribute to the 1D-myo-inositol 3-phosphate site. Positions 259, 264, and 323 each coordinate UDP-N-acetyl-alpha-D-glucosamine. Residues Y332, R333, and A335 each coordinate Mg(2+). UDP-N-acetyl-alpha-D-glucosamine-binding residues include E345 and E353. A Mg(2+)-binding site is contributed by T359.

It belongs to the glycosyltransferase group 1 family. MshA subfamily. As to quaternary structure, homodimer.

The catalysed reaction is 1D-myo-inositol 3-phosphate + UDP-N-acetyl-alpha-D-glucosamine = 1D-myo-inositol 2-acetamido-2-deoxy-alpha-D-glucopyranoside 3-phosphate + UDP + H(+). Functionally, catalyzes the transfer of a N-acetyl-glucosamine moiety to 1D-myo-inositol 3-phosphate to produce 1D-myo-inositol 2-acetamido-2-deoxy-glucopyranoside 3-phosphate in the mycothiol biosynthesis pathway. This chain is D-inositol 3-phosphate glycosyltransferase, found in Corynebacterium kroppenstedtii (strain DSM 44385 / JCM 11950 / CIP 105744 / CCUG 35717).